A 524-amino-acid polypeptide reads, in one-letter code: uncharacterized protein (524 aa).

The N-terminal stretch at 1–21 (MLLRSVWYKLGSLLIILPLTG) is a signal peptide. A lipid anchor (N-palmitoyl cysteine) is attached at cysteine 22. Residue cysteine 22 is the site of S-diacylglycerol cysteine attachment.

This sequence belongs to the MG067/MG068/MG395 family.

It is found in the cell membrane. This is an uncharacterized protein from Mycoplasma pneumoniae (strain ATCC 29342 / M129 / Subtype 1) (Mycoplasmoides pneumoniae).